We begin with the raw amino-acid sequence, 882 residues long: Alanine--tRNA ligase (882 aa).

4 residues coordinate Zn(2+): H570, H574, C672, and H676.

Belongs to the class-II aminoacyl-tRNA synthetase family. Zn(2+) serves as cofactor.

It localises to the cytoplasm. It carries out the reaction tRNA(Ala) + L-alanine + ATP = L-alanyl-tRNA(Ala) + AMP + diphosphate. Functionally, catalyzes the attachment of alanine to tRNA(Ala) in a two-step reaction: alanine is first activated by ATP to form Ala-AMP and then transferred to the acceptor end of tRNA(Ala). Also edits incorrectly charged Ser-tRNA(Ala) and Gly-tRNA(Ala) via its editing domain. This chain is Alanine--tRNA ligase, found in Xanthomonas euvesicatoria pv. vesicatoria (strain 85-10) (Xanthomonas campestris pv. vesicatoria).